Here is a 601-residue protein sequence, read N- to C-terminus: Elongation factor 4 (601 aa).

The region spanning aspartate 7–lysine 189 is the tr-type G domain. GTP contacts are provided by residues aspartate 19–threonine 24 and asparagine 136–aspartate 139.

Belongs to the TRAFAC class translation factor GTPase superfamily. Classic translation factor GTPase family. LepA subfamily.

The protein resides in the cell inner membrane. The catalysed reaction is GTP + H2O = GDP + phosphate + H(+). Required for accurate and efficient protein synthesis under certain stress conditions. May act as a fidelity factor of the translation reaction, by catalyzing a one-codon backward translocation of tRNAs on improperly translocated ribosomes. Back-translocation proceeds from a post-translocation (POST) complex to a pre-translocation (PRE) complex, thus giving elongation factor G a second chance to translocate the tRNAs correctly. Binds to ribosomes in a GTP-dependent manner. This is Elongation factor 4 from Methylobacterium nodulans (strain LMG 21967 / CNCM I-2342 / ORS 2060).